Consider the following 299-residue polypeptide: MKPDAHHVKQFLLRLQDDICQTLSAVDGANFVEDSWRREAGGGGRSRVLRNGGIFEQAGVNFSHVHGDAMPASATAHRPELAGRSFEAMGVSLVVHPHNPYIPTSHANVRFFIAEKPGADPVWWFGGGFDLTPYYGFEEDAVHWHRTARDLCQPFGDDVYPRYKKWCDDYFFLKHRNEQRGIGGLFFDDLNTPDFDHCFAFMQAVGNGYTEAYLPIVERRKAMVWGERERNFQLYRRGRYVEFNLVWDRGTLFGLQTGGRTESILMSMPPLVRWEYDWQPEAGSPEAALSEFIQVRDWI.

Ser92 is a binding site for substrate. Residues His96 and His106 each contribute to the a divalent metal cation site. Residue His106 is the Proton donor of the active site. 108–110 (NVR) lines the substrate pocket. Positions 145 and 175 each coordinate a divalent metal cation. An important for dimerization region spans residues 240–275 (YVEFNLVWDRGTLFGLQTGGRTESILMSMPPLVRWE). 258-260 (GGR) is a substrate binding site.

It belongs to the aerobic coproporphyrinogen-III oxidase family. As to quaternary structure, homodimer. The cofactor is a divalent metal cation.

It localises to the cytoplasm. The enzyme catalyses coproporphyrinogen III + O2 + 2 H(+) = protoporphyrinogen IX + 2 CO2 + 2 H2O. It functions in the pathway porphyrin-containing compound metabolism; protoporphyrin-IX biosynthesis; protoporphyrinogen-IX from coproporphyrinogen-III (O2 route): step 1/1. In terms of biological role, involved in the heme biosynthesis. Catalyzes the aerobic oxidative decarboxylation of propionate groups of rings A and B of coproporphyrinogen-III to yield the vinyl groups in protoporphyrinogen-IX. This is Oxygen-dependent coproporphyrinogen-III oxidase from Salmonella newport (strain SL254).